A 715-amino-acid chain; its full sequence is Phosphatidylinositol 4-phosphate 5-kinase 6 (715 aa).

The span at 1–13 (MSVAHADDADDYS) shows a compositional bias: basic and acidic residues. Residues 1–21 (MSVAHADDADDYSRPTGESYH) are disordered. MORN repeat units follow at residues 32–54 (YTGQ…DGCM), 55–77 (YVGD…SGAT), 78–100 (YEGD…SGDL), 101–123 (YRGS…NGDC), 124–146 (YDGE…NENH), 147–169 (YIGQ…NGNR), 170–192 (YDGS…DGSF), and 193–214 (YVGV…STSS). Positions 253–306 (GASEQSSSGNRTKNSERPRRRSVDGRVSNGEMELRSNGSGYLQVDDNAESTRSS) are disordered. Polar residues predominate over residues 255–264 (SEQSSSGNRT). The span at 265-276 (KNSERPRRRSVD) shows a compositional bias: basic and acidic residues. Residues 321 to 711 (TISKGHKNYE…RFRDFIFRVF (391 aa)) form the PIPK domain. Residues 671–692 (YDISKKLEHAYKSMQYDPTSIS) form an activation loop region.

It carries out the reaction a 1,2-diacyl-sn-glycero-3-phospho-(1D-myo-inositol 4-phosphate) + ATP = a 1,2-diacyl-sn-glycero-3-phospho-(1D-myo-inositol-4,5-bisphosphate) + ADP + H(+). This is Phosphatidylinositol 4-phosphate 5-kinase 6 (PIP5K6) from Arabidopsis thaliana (Mouse-ear cress).